A 427-amino-acid polypeptide reads, in one-letter code: Adenylosuccinate synthetase (427 aa).

GTP is bound by residues 12–18 and 40–42; these read GDEGKGK and GHT. Asp13 acts as the Proton acceptor in catalysis. Residues Asp13 and Gly40 each coordinate Mg(2+). Residues 13 to 16, 38 to 41, Thr127, Arg141, Gln222, Thr237, and Arg301 each bind IMP; these read DEGK and NAGH. His41 functions as the Proton donor in the catalytic mechanism. Position 297-303 (297-303) interacts with substrate; sequence VVTKRPR. GTP is bound by residues Arg303, 329–331, and 411–413; these read SLD and AVG.

It belongs to the adenylosuccinate synthetase family. As to quaternary structure, homodimer. It depends on Mg(2+) as a cofactor.

The protein localises to the cytoplasm. It carries out the reaction IMP + L-aspartate + GTP = N(6)-(1,2-dicarboxyethyl)-AMP + GDP + phosphate + 2 H(+). The protein operates within purine metabolism; AMP biosynthesis via de novo pathway; AMP from IMP: step 1/2. Its function is as follows. Plays an important role in the de novo pathway of purine nucleotide biosynthesis. Catalyzes the first committed step in the biosynthesis of AMP from IMP. The chain is Adenylosuccinate synthetase from Leuconostoc citreum (strain KM20).